The following is a 504-amino-acid chain: Alpha,alpha-trehalose-phosphate synthase [UDP-forming] (504 aa).

Residues Y97 and D151 each coordinate D-glucose 6-phosphate. Residues R287 and K292 each contribute to the UDP site. Residues R287 and K292 each contribute to the UDP-alpha-D-glucose site. R325 is a binding site for D-glucose 6-phosphate. 386-394 (DGMNLVSYE) lines the UDP-alpha-D-glucose pocket. 390 to 394 (LVSYE) contributes to the UDP binding site. Residues 482–504 (AGKLPTKETPVNGETSKLETSSQ) form a disordered region. Positions 493–504 (NGETSKLETSSQ) are enriched in polar residues.

The protein belongs to the glycosyltransferase 20 family.

The enzyme catalyses D-glucose 6-phosphate + UDP-alpha-D-glucose = alpha,alpha-trehalose 6-phosphate + UDP + H(+). It participates in carbohydrate biosynthesis. Its function is as follows. Synthase catalytic subunit of the trehalose synthase complex that catalyzes the production of trehalose from glucose-6-phosphate and UDP-alpha-D-glucose in a two step process. This chain is Alpha,alpha-trehalose-phosphate synthase [UDP-forming] (tpsA), found in Emericella nidulans (strain FGSC A4 / ATCC 38163 / CBS 112.46 / NRRL 194 / M139) (Aspergillus nidulans).